Reading from the N-terminus, the 126-residue chain is Probable 4-amino-4-deoxy-L-arabinose-phosphoundecaprenol flippase subunit ArnF (126 aa).

The helical transmembrane segment at 1 to 21 (MGFFWALLSVGLVSAAQLLLR) threads the bilayer. The Periplasmic segment spans residues 22–47 (SAMVALPPLTDIVAFLQHLLHFQPGT). Residues 48 to 68 (FGLFFGLLGYLLSMVCWYFAL) traverse the membrane as a helical segment. Topologically, residues 69-76 (HRLPLSKA) are cytoplasmic. A helical transmembrane segment spans residues 77 to 97 (YALLSLSYILVWAAAIWLPGW). At 98–100 (HEP) the chain is on the periplasmic side. A helical transmembrane segment spans residues 101–121 (FYWQSLLGVAIIVAGVLTIFW). Over 122-126 (PVKRR) the chain is Cytoplasmic.

Belongs to the ArnF family. As to quaternary structure, heterodimer of ArnE and ArnF.

Its subcellular location is the cell inner membrane. It participates in bacterial outer membrane biogenesis; lipopolysaccharide biosynthesis. In terms of biological role, translocates 4-amino-4-deoxy-L-arabinose-phosphoundecaprenol (alpha-L-Ara4N-phosphoundecaprenol) from the cytoplasmic to the periplasmic side of the inner membrane. The chain is Probable 4-amino-4-deoxy-L-arabinose-phosphoundecaprenol flippase subunit ArnF from Klebsiella pneumoniae subsp. pneumoniae (strain ATCC 700721 / MGH 78578).